The chain runs to 101 residues: MIPGELIPAEGTIELNAGRPTVTLTVANTGDRPIQVGSHYHFYEVNPALQFEREQARGMRLDIPAGTAIRFEPGDERVVQLVALGGTRQIYGFRGEVNGAL.

It belongs to the urease beta subunit family. As to quaternary structure, heterotrimer of UreA (gamma), UreB (beta) and UreC (alpha) subunits. Three heterotrimers associate to form the active enzyme.

The protein resides in the cytoplasm. It catalyses the reaction urea + 2 H2O + H(+) = hydrogencarbonate + 2 NH4(+). It participates in nitrogen metabolism; urea degradation; CO(2) and NH(3) from urea (urease route): step 1/1. The protein is Urease subunit beta of Thermosynechococcus vestitus (strain NIES-2133 / IAM M-273 / BP-1).